Reading from the N-terminus, the 151-residue chain is Small ribosomal subunit protein uS15 (151 aa).

This sequence belongs to the universal ribosomal protein uS15 family.

This chain is Small ribosomal subunit protein uS15 (RPS13), found in Ciona intestinalis (Transparent sea squirt).